Here is a 725-residue protein sequence, read N- to C-terminus: Polyribonucleotide nucleotidyltransferase (725 aa).

The Mg(2+) site is built by D506 and D512. Residues 571 to 631 (PLIEQFAIDP…QNIIDACEHI (61 aa)) form the KH domain. Positions 657 to 724 (DEVVIGKVER…KKDRIELSSA (68 aa)) constitute an S1 motif domain.

Belongs to the polyribonucleotide nucleotidyltransferase family. Mg(2+) is required as a cofactor.

It localises to the cytoplasm. It catalyses the reaction RNA(n+1) + phosphate = RNA(n) + a ribonucleoside 5'-diphosphate. Functionally, involved in mRNA degradation. Catalyzes the phosphorolysis of single-stranded polyribonucleotides processively in the 3'- to 5'-direction. This is Polyribonucleotide nucleotidyltransferase from Aliarcobacter butzleri (strain RM4018) (Arcobacter butzleri).